We begin with the raw amino-acid sequence, 195 residues long: Iron-sulfur flavoprotein AF_1519 (195 aa).

[4Fe-4S] cluster is bound by residues cysteine 45, cysteine 48, cysteine 51, and cysteine 57.

This sequence belongs to the SsuE family. Isf subfamily. Homodimer. FMN serves as cofactor. Requires [4Fe-4S] cluster as cofactor.

Its function is as follows. Redox-active protein probably involved in electron transport. The polypeptide is Iron-sulfur flavoprotein AF_1519 (Archaeoglobus fulgidus (strain ATCC 49558 / DSM 4304 / JCM 9628 / NBRC 100126 / VC-16)).